Reading from the N-terminus, the 113-residue chain is Hydrogenase maturation factor HypA (113 aa).

His2 provides a ligand contact to Ni(2+). The Zn(2+) site is built by Cys70, Cys73, Cys86, and Cys88.

The protein belongs to the HypA/HybF family.

Functionally, involved in the maturation of [NiFe] hydrogenases. Required for nickel insertion into the metal center of the hydrogenase. The chain is Hydrogenase maturation factor HypA from Nostoc sp. (strain PCC 7120 / SAG 25.82 / UTEX 2576).